The following is a 179-amino-acid chain: Negative modulator of initiation of replication (179 aa).

Residues 86 to 87 (AV) are interaction with DNA.

Belongs to the SeqA family. In terms of assembly, homodimer. Polymerizes to form helical filaments.

Its subcellular location is the cytoplasm. Functionally, negative regulator of replication initiation, which contributes to regulation of DNA replication and ensures that replication initiation occurs exactly once per chromosome per cell cycle. Binds to pairs of hemimethylated GATC sequences in the oriC region, thus preventing assembly of replication proteins and re-initiation at newly replicated origins. Repression is relieved when the region becomes fully methylated. The protein is Negative modulator of initiation of replication of Shewanella woodyi (strain ATCC 51908 / MS32).